Here is a 70-residue protein sequence, read N- to C-terminus: Large ribosomal subunit protein bL28 (70 aa).

The segment at 1 to 26 (MAKRCEVCGKAPRSGNTVSHSDKKSG) is disordered.

Belongs to the bacterial ribosomal protein bL28 family.

The protein is Large ribosomal subunit protein bL28 (rpmB) of Thermotoga maritima (strain ATCC 43589 / DSM 3109 / JCM 10099 / NBRC 100826 / MSB8).